We begin with the raw amino-acid sequence, 401 residues long: L-threonine ammonia-lyase (401 aa).

N6-(pyridoxal phosphate)lysine is present on K51. Residues N78, 178-181 (GGGL), and S301 contribute to the pyridoxal 5'-phosphate site. Positions 326 to 401 (FIETFVMDRP…AKGYEVRIVG (76 aa)) constitute an ACT domain.

Belongs to the serine/threonine dehydratase family. In terms of assembly, homotetramer. Requires pyridoxal 5'-phosphate as cofactor.

It carries out the reaction L-threonine = 2-oxobutanoate + NH4(+). The enzyme catalyses L-serine = pyruvate + NH4(+). Its pathway is amino-acid biosynthesis; L-isoleucine biosynthesis; 2-oxobutanoate from L-threonine: step 1/1. Its activity is regulated as follows. Activity is insensitive to allosteric regulators L-valine and L-isoleucine at low concentrations, while these L-amino acids are inhibitors at high concentrations. Is insensitive to ammonium chloride and AMP. Inhibited in the presence of aminoxyacetic acid (AOAA), an inhibitor of pyridoxal phosphate-dependent enzymes. In terms of biological role, catalyzes the conversion of L-threonine to 2-oxobutanoate and ammonia. Can also use L-serine, but the catalytic efficiency toward L-threonine is about sixfold higher than that toward L-serine. Also shows weak activity toward L-allo-threonine, but cannot use the corresponding D-amino acids. Does not exhibit racemase activity toward various amino acids, including serine. Physiologically, is likely involved in the threonine-dependent pathway of isoleucine biosynthesis. The chain is L-threonine ammonia-lyase from Thermotoga maritima (strain ATCC 43589 / DSM 3109 / JCM 10099 / NBRC 100826 / MSB8).